The following is a 274-amino-acid chain: MAIHLYKTSTPSTRNGAVDSQVKSNPRNNLIYGQHRCGKGRNARGIITARHRGGGHKRLYRKIDFRRNAKDIYGRIVTIEYDPNRNAYICLIHYGDGEKRYILHPRGAIIGDTIVSGTEVPIKMGNALPLTDMPLGTAIHNIEITLGKGGQLARAAGAVAKLIAKEGKSATIKLPSGEVRLISKNCSATVGQVGNVGVNQKSLGRAGSKCWLGKRPVVRGVVMNPVDHPHGGGEGRAPIGRKKPATPWGYPALGRRTRKRKKYSETLILRRRSK.

2 disordered regions span residues 1–25 (MAIHLYKTSTPSTRNGAVDSQVKSN) and 224–274 (NPVD…RRSK).

This sequence belongs to the universal ribosomal protein uL2 family. Part of the 50S ribosomal subunit.

Its subcellular location is the plastid. The protein resides in the chloroplast. The protein is Large ribosomal subunit protein uL2cz/uL2cy (rpl2-A) of Aethionema cordifolium (Lebanon stonecress).